Reading from the N-terminus, the 343-residue chain is tRNA N6-adenosine threonylcarbamoyltransferase (343 aa).

Positions 114 and 118 each coordinate Fe cation. Residues 137–141, aspartate 171, glycine 184, aspartate 188, and asparagine 278 contribute to the substrate site; that span reads LVSGG. Aspartate 306 serves as a coordination point for Fe cation.

The protein belongs to the KAE1 / TsaD family. The cofactor is Fe(2+).

It is found in the cytoplasm. The catalysed reaction is L-threonylcarbamoyladenylate + adenosine(37) in tRNA = N(6)-L-threonylcarbamoyladenosine(37) in tRNA + AMP + H(+). Functionally, required for the formation of a threonylcarbamoyl group on adenosine at position 37 (t(6)A37) in tRNAs that read codons beginning with adenine. Is involved in the transfer of the threonylcarbamoyl moiety of threonylcarbamoyl-AMP (TC-AMP) to the N6 group of A37, together with TsaE and TsaB. TsaD likely plays a direct catalytic role in this reaction. The sequence is that of tRNA N6-adenosine threonylcarbamoyltransferase from Acidothermus cellulolyticus (strain ATCC 43068 / DSM 8971 / 11B).